The chain runs to 710 residues: uncharacterized protein (710 aa).

A disordered region spans residues 1 to 40 (MSESDGAFKSPSLPPSHHAPAPMSPEKIRAPAEQMDGPVE). A compositionally biased stretch (low complexity) spans 15 to 25 (PSHHAPAPMSP). The 58-residue stretch at 108–165 (VVIGRIKPGCDLLMEHPSISRYHCILQYGNDKMSKTGKGWHIFELGSTHGSRMNKKRL) folds into the FHA domain. Coiled-coil stretches lie at residues 206 to 240 (TEMK…KEEE), 409 to 440 (ETDT…LSAG), and 471 to 502 (AKTK…KIAK). Residues 230-250 (IDDEKREKEEEGCGWGMDYGE) form a disordered region. Disordered regions lie at residues 535–560 (EIDQ…APTS), 591–619 (KNSL…AFGS), and 671–710 (EDYG…AGRY). Over residues 538-560 (QTPSQGPGPSTSATLPATVAPTS) the composition is skewed to polar residues. The stretch at 613–661 (QKEAFGSKVQKRVAQWEEELEAEKEELAKKQKLEAEEEAKKKVQRVRRR) forms a coiled coil.

This is an uncharacterized protein from Caenorhabditis elegans.